The following is a 356-amino-acid chain: UDP-N-acetylglucosamine--N-acetylmuramyl-(pentapeptide) pyrophosphoryl-undecaprenol N-acetylglucosamine transferase (356 aa).

UDP-N-acetyl-alpha-D-glucosamine is bound by residues Thr-15–Gly-17, Asn-127, Arg-163, Ser-191, Ile-244, Ala-263–Glu-268, and Gln-288.

It belongs to the glycosyltransferase 28 family. MurG subfamily.

The protein localises to the cell inner membrane. It catalyses the reaction di-trans,octa-cis-undecaprenyl diphospho-N-acetyl-alpha-D-muramoyl-L-alanyl-D-glutamyl-meso-2,6-diaminopimeloyl-D-alanyl-D-alanine + UDP-N-acetyl-alpha-D-glucosamine = di-trans,octa-cis-undecaprenyl diphospho-[N-acetyl-alpha-D-glucosaminyl-(1-&gt;4)]-N-acetyl-alpha-D-muramoyl-L-alanyl-D-glutamyl-meso-2,6-diaminopimeloyl-D-alanyl-D-alanine + UDP + H(+). Its pathway is cell wall biogenesis; peptidoglycan biosynthesis. Cell wall formation. Catalyzes the transfer of a GlcNAc subunit on undecaprenyl-pyrophosphoryl-MurNAc-pentapeptide (lipid intermediate I) to form undecaprenyl-pyrophosphoryl-MurNAc-(pentapeptide)GlcNAc (lipid intermediate II). This Yersinia pseudotuberculosis serotype O:1b (strain IP 31758) protein is UDP-N-acetylglucosamine--N-acetylmuramyl-(pentapeptide) pyrophosphoryl-undecaprenol N-acetylglucosamine transferase.